A 99-amino-acid chain; its full sequence is Large ribosomal subunit protein uL23 (99 aa).

It belongs to the universal ribosomal protein uL23 family. In terms of assembly, part of the 50S ribosomal subunit. Contacts protein L29, and trigger factor when it is bound to the ribosome.

Functionally, one of the early assembly proteins it binds 23S rRNA. One of the proteins that surrounds the polypeptide exit tunnel on the outside of the ribosome. Forms the main docking site for trigger factor binding to the ribosome. This Stenotrophomonas maltophilia (strain R551-3) protein is Large ribosomal subunit protein uL23.